The chain runs to 279 residues: Tryptophan synthase alpha chain (279 aa).

Active-site proton acceptor residues include Glu-50 and Asp-61.

The protein belongs to the TrpA family. Tetramer of two alpha and two beta chains.

The catalysed reaction is (1S,2R)-1-C-(indol-3-yl)glycerol 3-phosphate + L-serine = D-glyceraldehyde 3-phosphate + L-tryptophan + H2O. It participates in amino-acid biosynthesis; L-tryptophan biosynthesis; L-tryptophan from chorismate: step 5/5. In terms of biological role, the alpha subunit is responsible for the aldol cleavage of indoleglycerol phosphate to indole and glyceraldehyde 3-phosphate. The sequence is that of Tryptophan synthase alpha chain from Brucella melitensis biotype 2 (strain ATCC 23457).